The chain runs to 92 residues: Small ribosomal subunit protein uS19 (92 aa).

It belongs to the universal ribosomal protein uS19 family.

Its function is as follows. Protein S19 forms a complex with S13 that binds strongly to the 16S ribosomal RNA. This chain is Small ribosomal subunit protein uS19, found in Azorhizobium caulinodans (strain ATCC 43989 / DSM 5975 / JCM 20966 / LMG 6465 / NBRC 14845 / NCIMB 13405 / ORS 571).